Here is a 205-residue protein sequence, read N- to C-terminus: Holliday junction branch migration complex subunit RuvA (205 aa).

Residues 1–64 (MIGRLRGVLV…EDAQLLYGFI (64 aa)) are domain I. Positions 65 to 143 (TKQERALFRL…SLMEASAGSE (79 aa)) are domain II. Residues 144–156 (REFVLQSNYSPAP) are flexible linker. The segment at 157–205 (TVNSAEEDAISALISLGYKPPQASKSVSAAYKEGMDSETLIKAALKSML) is domain III.

The protein belongs to the RuvA family. Homotetramer. Forms an RuvA(8)-RuvB(12)-Holliday junction (HJ) complex. HJ DNA is sandwiched between 2 RuvA tetramers; dsDNA enters through RuvA and exits via RuvB. An RuvB hexamer assembles on each DNA strand where it exits the tetramer. Each RuvB hexamer is contacted by two RuvA subunits (via domain III) on 2 adjacent RuvB subunits; this complex drives branch migration. In the full resolvosome a probable DNA-RuvA(4)-RuvB(12)-RuvC(2) complex forms which resolves the HJ.

The protein localises to the cytoplasm. The RuvA-RuvB-RuvC complex processes Holliday junction (HJ) DNA during genetic recombination and DNA repair, while the RuvA-RuvB complex plays an important role in the rescue of blocked DNA replication forks via replication fork reversal (RFR). RuvA specifically binds to HJ cruciform DNA, conferring on it an open structure. The RuvB hexamer acts as an ATP-dependent pump, pulling dsDNA into and through the RuvAB complex. HJ branch migration allows RuvC to scan DNA until it finds its consensus sequence, where it cleaves and resolves the cruciform DNA. The protein is Holliday junction branch migration complex subunit RuvA of Shewanella baltica (strain OS223).